Reading from the N-terminus, the 81-residue chain is Exodeoxyribonuclease 7 small subunit (81 aa).

The interval Lys59–Glu81 is disordered. The span at Leu60–Leu70 shows a compositional bias: basic and acidic residues. Polar residues predominate over residues Asp71–Glu81.

This sequence belongs to the XseB family. As to quaternary structure, heterooligomer composed of large and small subunits.

It is found in the cytoplasm. The catalysed reaction is Exonucleolytic cleavage in either 5'- to 3'- or 3'- to 5'-direction to yield nucleoside 5'-phosphates.. In terms of biological role, bidirectionally degrades single-stranded DNA into large acid-insoluble oligonucleotides, which are then degraded further into small acid-soluble oligonucleotides. This chain is Exodeoxyribonuclease 7 small subunit, found in Lactobacillus gasseri (strain ATCC 33323 / DSM 20243 / BCRC 14619 / CIP 102991 / JCM 1131 / KCTC 3163 / NCIMB 11718 / NCTC 13722 / AM63).